The chain runs to 121 residues: Large ribosomal subunit protein bL20 (121 aa).

The protein belongs to the bacterial ribosomal protein bL20 family.

Functionally, binds directly to 23S ribosomal RNA and is necessary for the in vitro assembly process of the 50S ribosomal subunit. It is not involved in the protein synthesizing functions of that subunit. This is Large ribosomal subunit protein bL20 (rplT) from Chlamydia pneumoniae (Chlamydophila pneumoniae).